The primary structure comprises 162 residues: Protein NrdI (162 aa).

Belongs to the NrdI family.

Its function is as follows. Probably involved in ribonucleotide reductase function. The protein is Protein NrdI of Streptococcus pyogenes serotype M28 (strain MGAS6180).